The primary structure comprises 205 residues: Lymphotoxin-alpha (205 aa).

The N-terminal stretch at 1–34 (MTPPGRLYLPRVRGTRLLFLLLGLLLALPPRAKG) is a signal peptide. The THD domain occupies 63–205 (PAAHLVGDPS…SSVFFGAFAL (143 aa)). The N-linked (GlcNAc...) asparagine glycan is linked to asparagine 96. Residues cysteine 120 and cysteine 156 are joined by a disulfide bond.

The protein belongs to the tumor necrosis factor family. Homotrimer, and heterotrimer of either two LTB and one LTA subunits or (less prevalent) two LTA and one LTB subunits. Interacts with TNFRSF14.

The protein localises to the secreted. It is found in the membrane. In terms of biological role, cytokine that in its homotrimeric form binds to TNFRSF1A/TNFR1, TNFRSF1B/TNFBR and TNFRSF14/HVEM. In its heterotrimeric form with LTB binds to TNFRSF3/LTBR. Lymphotoxin is produced by lymphocytes and is cytotoxic for a wide range of tumor cells in vitro and in vivo. The protein is Lymphotoxin-alpha (LTA) of Marmota monax (Woodchuck).